The following is a 581-amino-acid chain: Protein FAM83D (581 aa).

Positions 1 to 297 are DUF1669; the sequence is MALRYDGLDE…LYAQSKPISS (297 aa). Positions 75–101 are disordered; sequence PGEEGAAAGAEDSFGSSHDCSSGTYFP. The segment covering 88–98 has biased composition (polar residues); that stretch reads FGSSHDCSSGT. A Phosphoserine modification is found at serine 296. A required for interaction with KIF22 and function in chromosome congression region spans residues 338–581; that stretch reads TPRKVELGGE…REIMLYPSYQ (244 aa). Disordered stretches follow at residues 366 to 401 and 426 to 503; these read EDYFSSRKDRLEGRRVTDAATQTEPGETPAVSMSDV and QTVV…GPPK. Residues 369 to 382 are compositionally biased toward basic and acidic residues; sequence FSSRKDRLEGRRVT. The span at 426 to 438 shows a compositional bias: low complexity; the sequence is QTVVPTTSATTQT. Serine 456 is subject to Phosphoserine. Residues 462-488 are compositionally biased toward low complexity; the sequence is SVSRSSSLRSSSSLSSQGSVASSIGSQ. The residue at position 507 (threonine 507) is a Phosphothreonine.

Belongs to the FAM83 family. As to quaternary structure, interacts with FBXW7; promotes FBXW7 degradation. May interact with RAF1. Interacts with KIF22; recruits KIF22 to mitotic spindle microtubules. Interacts (via C-terminus) with DYNLL1. Interacts with HMMR. Directly interacts (via DUF1669) with CSNK1A1 and CSNK1A1L. Phosphorylated during mitosis.

The protein localises to the cytoplasm. The protein resides in the cytoskeleton. It is found in the spindle. Its subcellular location is the spindle pole. Through the degradation of FBXW7, may act indirectly on the expression and downstream signaling of MTOR, JUN and MYC. May play also a role in cell proliferation through activation of the ERK1/ERK2 signaling cascade. May also be important for proper chromosome congression and alignment during mitosis through its interaction with KIF22. This chain is Protein FAM83D, found in Bos taurus (Bovine).